The chain runs to 2006 residues: Sodium channel protein type 2 subunit alpha (2006 aa).

A Phosphoserine modification is found at serine 4. Positions 28-61 (RIAEEKAKRPKQERKDEDDENGPKPNSDLEAGKS) are disordered. A Glycyl lysine isopeptide (Lys-Gly) (interchain with G-Cter in SUMO1) cross-link involves residue lysine 38. An I repeat occupies 111 to 456 (ILTPFNPIRK…QQMLEQLKKQ (346 aa)). A helical transmembrane segment spans residues 130–148 (LFNVLIMCTILTNCVFMTM). A helical membrane pass occupies residues 156 to 176 (KNVEYTFTGIYTFESLIKILA). The chain crosses the membrane as a helical span at residues 191–208 (WNWLDFTVITFAYVTEFV). A helical membrane pass occupies residues 215–231 (ALRTFRVLRALKTISVI). A helical transmembrane segment spans residues 251–270 (VMILTVFCLSVFALIGLQLF). A disulfide bridge connects residues cysteine 278 and cysteine 338. Residues asparagine 285, asparagine 291, asparagine 297, asparagine 303, asparagine 308, and asparagine 340 are each glycosylated (N-linked (GlcNAc...) asparagine). Residues 370–394 (FSWAFLSLFRLMTQDFWENLYQLTL) constitute an intramembrane region (pore-forming). Residues 402-422 (MIFFVLVIFLGSFYLINLILA) traverse the membrane as a helical segment. Phosphoserine is present on residues serine 468, serine 471, serine 484, serine 526, serine 528, serine 531, serine 553, serine 554, serine 558, serine 573, serine 576, serine 589, serine 610, serine 623, serine 687, serine 688, and serine 722. The tract at residues 494-529 (SSKSEKELKNRRKKKKQKEQAGEEEKEDAVRKSASE) is disordered. Over residues 511–529 (KEQAGEEEKEDAVRKSASE) the composition is skewed to basic and acidic residues. The tract at residues 589–635 (SENDFADDEHSTFEDNDSRRDSLFVPHRHGERRPSNVSQASRASRGI) is disordered. Residues 596–610 (DEHSTFEDNDSRRDS) show a composition bias toward basic and acidic residues. Residues 742–1014 (CCKPWLKVKH…QIAVGRMQKG (273 aa)) form an II repeat. Residues 761 to 779 (FVDLAITICIVLNTLFMAM) traverse the membrane as a helical segment. A helical membrane pass occupies residues 791–810 (VLSVGNLVFTGIFTAEMFLK). The chain crosses the membrane as a helical span at residues 825–844 (NIFDGFIVSLSLMELGLANV). A helical membrane pass occupies residues 847–864 (LSVLRSFRLLRVFKLAKS). Residues 881–899 (ALGNLTLVLAIIVFIFAVV) traverse the membrane as a helical segment. Cysteine 913 and cysteine 919 are joined by a disulfide. The interval 918–919 (DC) is binds SCN2B. Residues 929 to 949 (FFHSFLIVFRVLCGEWIETMW) constitute an intramembrane region (pore-forming). Cysteines 951 and 960 form a disulfide. Residues 963–983 (VFMMVMVIGNLVVLNLFLALL) form a helical membrane-spanning segment. The interval 1121 to 1167 (EEFSSESDMEESKEKLNATSSSEGSTVDIGAPAEGEQPEAEPEESLE) is disordered. The segment covering 1156–1167 (EQPEAEPEESLE) has biased composition (acidic residues). The III repeat unit spans residues 1191–1505 (KGKLWWNLRK…KKYYNAMKKL (315 aa)). Residues 1211–1228 (FETFIVFMILLSSGALAF) form a helical membrane-spanning segment. Residues 1242–1260 (MLEYADKVFTYIFILEMLL) traverse the membrane as a helical segment. The helical transmembrane segment at 1275-1293 (WCWLDFLIVDVSLVSLTAN) threads the bilayer. A helical membrane pass occupies residues 1302–1320 (AIKSLRTLRALRPLRALSR). The chain crosses the membrane as a helical span at residues 1338–1357 (IMNVLLVCLIFWLIFSIMGV). Cysteine 1367 and cysteine 1387 are disulfide-bonded. Positions 1410 to 1431 (GLGYLSLLQVATFKGWMDIMYA) form an intramembrane region, pore-forming. Residues 1449–1470 (YMYLYFVIFIIFGSFFTLNLFI) form a helical membrane-spanning segment. Position 1507 is a phosphoserine (serine 1507). The stretch at 1514 to 1812 (IPRPANKFQG…WEKFDPDATQ (299 aa)) is one IV repeat. A helical membrane pass occupies residues 1534–1551 (FDISIMILICLNMVTMMV). Residues 1563-1581 (ILYWINLVFIVLFTGECVL) traverse the membrane as a helical segment. The chain crosses the membrane as a helical span at residues 1594 to 1611 (GWNIFDFVVVILSIVGMF). Residues 1625 to 1641 (LFRVIRLARIGRILRLI) traverse the membrane as a helical segment. Residues 1661 to 1678 (LFNIGLLLFLVMFIYAIF) form a helical membrane-spanning segment. Positions 1701–1723 (FGNSMICLFQITTSAGWDGLLAP) form an intramembrane region, pore-forming. The cysteines at positions 1732 and 1747 are disulfide-linked. Residues 1754–1776 (IFFFVSYIIISFLVVVNMYIAVI) form a helical membrane-spanning segment. Residues 1906 to 1935 (EEVSAIVIQRAYRRYLLKQKVKKVSSIYKK) enclose the IQ domain. Position 1931 is a phosphoserine (serine 1931). Residues 1934 to 1965 (KKDKGKEDEGTPIKEDIITDKLNENSTPEKTD) are compositionally biased toward basic and acidic residues. A disordered region spans residues 1934 to 2006 (KKDKGKEDEG…KGKDIRESKK (73 aa)). 3 positions are modified to phosphothreonine: threonine 1944, threonine 1964, and threonine 1967. Position 1972 is a phosphoserine (serine 1972). Positions 1980-2006 (TKPEKEKFEKDKSEKEDKGKDIRESKK) are enriched in basic and acidic residues.

It belongs to the sodium channel (TC 1.A.1.10) family. Nav1.2/SCN2A subfamily. As to quaternary structure, heterooligomer of a large alpha subunit and a smaller beta subunit. Heterooligomer with SCN2B or SCN4B; disulfide-linked. Interacts with NEDD4L. Interacts with CALM. Interacts with TMEM233. Sumoylated at Lys-38. Sumoylation is induced by hypoxia, increases voltage-gated sodium current and mediates the early response to acute hypoxia in neurons. Sumoylated SCN2A is located at the cell membrane. As to expression, expressed in brain (at protein level). Detected in hippocampus, cortex and brain stem.

It localises to the cell membrane. It carries out the reaction Na(+)(in) = Na(+)(out). Mediates the voltage-dependent sodium ion permeability of excitable membranes. Assuming opened or closed conformations in response to the voltage difference across the membrane, the protein forms a sodium-selective channel through which Na(+) ions may pass in accordance with their electrochemical gradient. Implicated in the regulation of hippocampal replay occurring within sharp wave ripples (SPW-R) important for memory. This chain is Sodium channel protein type 2 subunit alpha, found in Mus musculus (Mouse).